A 1147-amino-acid chain; its full sequence is Probable phospholipid-transporting ATPase IIB (1147 aa).

Topologically, residues 1–146 (MADQIPLYPV…NQKYNVFTFI (146 aa)) are cytoplasmic. Residues 147–168 (PGVLYEQFKFFLNLYFLVISCS) form a helical membrane-spanning segment. At 169–173 (QFVPA) the chain is on the extracellular side. The chain crosses the membrane as a helical span at residues 174 to 196 (LKIGYLYTYWAPLGFVLAVTMTR). Residues 197–380 (EAIDEFRRFQ…GLLDLELNRL (184 aa)) are Cytoplasmic-facing. A helical transmembrane segment spans residues 381–401 (TKALFLALVALSIVMVTLQGF). Over 402–409 (VGPWYRNL) the chain is Extracellular. Residues 410–431 (FRFLLLFSYIIPISLRVNLDMG) traverse the membrane as a helical segment. Over 432-930 (KAVYGWMMMK…GRNSYKRSAA (499 aa)) the chain is Cytoplasmic. D468 (4-aspartylphosphate intermediate) is an active-site residue. Residues D468, K469, and T470 each contribute to the ATP site. Mg(2+) is bound at residue D468. T470 contacts Mg(2+). The disordered stretch occupies residues 503–535 (RDSYSQMQSQAGGNNTGSTPLRKAQSSAPKVRK). Residues 505–530 (SYSQMQSQAGGNNTGSTPLRKAQSSA) show a composition bias toward polar residues. The ATP site is built by E591, F633, K638, K657, R686, T687, T766, G767, D768, R848, and K854. D874 lines the Mg(2+) pocket. Positions 877 and 878 each coordinate ATP. D878 serves as a coordination point for Mg(2+). A helical membrane pass occupies residues 931-951 (LGQFVMHRGLIISTMQAVFSS). The Extracellular portion of the chain corresponds to 952–963 (VFYFASVPLYQG). A helical transmembrane segment spans residues 964 to 982 (FLMVGYATIYTMFPVFSLV). Topologically, residues 983-1012 (LDQDVKPEMAMLYPELYKDLTKGRSLSFKT) are cytoplasmic. Residues 1013–1031 (FLIWVLISIYQGGILMYGA) traverse the membrane as a helical segment. At 1032 to 1038 (LVLFESE) the chain is on the extracellular side. A helical transmembrane segment spans residues 1039–1061 (FVHVVAISFTALILTELLMVALT). Residues 1062–1067 (VRTWHW) lie on the Cytoplasmic side of the membrane. A helical transmembrane segment spans residues 1068–1088 (LMVVAEFLSLGCYVSSLAFLN). Topologically, residues 1089 to 1105 (EYFGIGRVSFGAFLDVA) are extracellular. A helical membrane pass occupies residues 1106–1130 (FITTVTFLWKVSAITVVSCLPLYVL). Over 1131 to 1147 (KYLRRKLSPPSYCKLAS) the chain is Cytoplasmic.

It belongs to the cation transport ATPase (P-type) (TC 3.A.3) family. Type IV subfamily. The cofactor is Mg(2+).

The protein localises to the golgi apparatus. It is found in the trans-Golgi network membrane. The catalysed reaction is ATP + H2O + phospholipidSide 1 = ADP + phosphate + phospholipidSide 2.. The polypeptide is Probable phospholipid-transporting ATPase IIB (ATP9B) (Homo sapiens (Human)).